The primary structure comprises 352 residues: C-X-C chemokine receptor type 4 (352 aa).

The tract at residues 1-21 is important for chemokine binding and signaling; the sequence is MEGISIYTSDNYTEEMGSGDY. The Extracellular segment spans residues 1 to 38; that stretch reads MEGISIYTSDNYTEEMGSGDYDSIKEPCFREENAHFNR. Tyr-7 is modified (sulfotyrosine). N-linked (GlcNAc...) asparagine glycosylation occurs at Asn-11. Tyr-12 is modified (sulfotyrosine). Ser-18 is a glycosylation site (O-linked (Xyl...) (chondroitin sulfate) serine). At Tyr-21 the chain carries Sulfotyrosine. 2 disulfide bridges follow: Cys-28–Cys-274 and Cys-109–Cys-186. Residues 39–63 traverse the membrane as a helical segment; sequence IFLPTIYSIIFLTGIVGNGLVILVM. The Cytoplasmic segment spans residues 64–77; that stretch reads GYQKKLRSMTDKYR. Residues 78–99 traverse the membrane as a helical segment; sequence LHLSVADLLFVITLPFWAVDAV. The tract at residues 94–97 is chemokine binding; sequence WAVD. The Extracellular portion of the chain corresponds to 100-110; it reads ANWYFGNFLCK. Residues 111–130 form a helical membrane-spanning segment; the sequence is AVHVIYTVNLYSSVLILAFI. The chemokine binding stretch occupies residues 113–117; it reads HVIYT. Residues 131–154 lie on the Cytoplasmic side of the membrane; it reads SLDRYLAIVHATNSQRPRKLLAEK. Residues 133-135 carry the Important for signaling motif; it reads DRY. Residues 135-147 are involved in dimerization; when bound to chemokine; it reads YLAIVHATNSQRP. A helical membrane pass occupies residues 155–174; it reads VVYVGVWIPALLLTIPDFIF. Topologically, residues 175–195 are extracellular; it reads ASVSEADDRYICDRFYPNDLW. Residues 186–190 form a chemokine binding, important for signaling region; the sequence is CDRFY. The interval 191–210 is involved in dimerization; the sequence is PNDLWVVVFQFQHIMVGLIL. The chain crosses the membrane as a helical span at residues 196-216; sequence VVVFQFQHIMVGLILPGIVIL. Residues 217–241 lie on the Cytoplasmic side of the membrane; that stretch reads SCYCIIISKLSHSKGHQKRKALKTT. The chain crosses the membrane as a helical span at residues 242–261; that stretch reads VILILAFFACWLPYYIGISI. Residues 262–282 lie on the Extracellular side of the membrane; sequence DSFILLEIIKQGCEFENTVHK. The involved in dimerization stretch occupies residues 266–268; that stretch reads LLE. Residues 283–302 form a helical membrane-spanning segment; it reads WISITEALAFFHCCLNPILY. The Cytoplasmic segment spans residues 303-352; it reads AFLGAKFKTSAQHALTSVSRGSSLKILSKGKRGGHSSVSTESESSSFHSS. 2 positions are modified to phosphoserine: Ser-319 and Ser-321. 2 positions are modified to phosphoserine; by PKC and GRK6: Ser-324 and Ser-325. The disordered stretch occupies residues 329–352; sequence LSKGKRGGHSSVSTESESSSFHSS. Ser-330 carries the post-translational modification Phosphoserine; by GRK6. Residue Lys-331 forms a Glycyl lysine isopeptide (Lys-Gly) (interchain with G-Cter in ubiquitin) linkage. A compositionally biased stretch (low complexity) spans 337-352; sequence HSSVSTESESSSFHSS. Ser-339 is subject to Phosphoserine; by GRK6. Phosphoserine occurs at positions 348 and 351.

The protein belongs to the G-protein coupled receptor 1 family. Monomer. Can form homodimers. Interacts with CD164. Interacts with ARRB2; the interaction is dependent on the C-terminal phosphorylation of CXCR4 and allows activation of MAPK1 and MAPK3. Interacts with ARR3; the interaction is dependent on the C-terminal phosphorylation of CXCR4 and modulates calcium mobilization. Interacts with RNF113A; the interaction, enhanced by CXCL12, promotes CXCR4 ubiquitination and subsequent degradation. Interacts (via the cytoplasmic C-terminal) with ITCH (via the WW domains I and II); the interaction, enhanced by CXCL12, promotes CXCR4 ubiquitination and leads to its degradation. Interacts with extracellular ubiquitin. Interacts with DBN1; this interaction is enhanced by antigenic stimulation. Following LPS binding, may form a complex with GDF5, HSP90AA1 and HSPA8. Post-translationally, phosphorylated on agonist stimulation. Rapidly phosphorylated on serine and threonine residues in the C-terminal. Phosphorylation at Ser-324 and Ser-325 leads to recruitment of ITCH, ubiquitination and protein degradation. Ubiquitinated after ligand binding, leading to its degradation. Ubiquitinated by ITCH at the cell membrane on agonist stimulation. The ubiquitin-dependent mechanism, endosomal sorting complex required for transport (ESCRT), then targets CXCR4 for lysosomal degradation. This process is dependent also on prior Ser-/Thr-phosphorylation in the C-terminal of CXCR4. Also binding of ARRB1 to STAM negatively regulates CXCR4 sorting to lysosomes though modulating ubiquitination of SFR5S. In terms of processing, sulfation is required for efficient binding of CXCL12/SDF-1alpha and promotes its dimerization. Post-translationally, O- and N-glycosylated. N-glycosylation can mask coreceptor function. The O-glycosylation chondroitin sulfate attachment does not affect interaction with CXCL12/SDF-1alpha nor its coreceptor activity.

It localises to the cell membrane. It is found in the cell junction. The protein resides in the early endosome. Its subcellular location is the late endosome. The protein localises to the lysosome. Receptor for the C-X-C chemokine CXCL12/SDF-1 that transduces a signal by increasing intracellular calcium ion levels and enhancing MAPK1/MAPK3 activation. Involved in the AKT signaling cascade. Plays a role in regulation of cell migration, e.g. during wound healing. Acts as a receptor for extracellular ubiquitin; leading to enhanced intracellular calcium ions and reduced cellular cAMP levels. Binds bacterial lipopolysaccharide (LPS) et mediates LPS-induced inflammatory response, including TNF secretion by monocytes. Involved in hematopoiesis and in cardiac ventricular septum formation. Also plays an essential role in vascularization of the gastrointestinal tract, probably by regulating vascular branching and/or remodeling processes in endothelial cells. Involved in cerebellar development. In the CNS, could mediate hippocampal-neuron survival. This chain is C-X-C chemokine receptor type 4 (CXCR4), found in Papio anubis (Olive baboon).